The primary structure comprises 273 residues: Octanoyltransferase (273 aa).

The 220-residue stretch at 35–254 (DRVPDTCLLL…HLRDILENAE (220 aa)) folds into the BPL/LPL catalytic domain. Residues 73 to 80 (RGGKITWH), 184 to 186 (AIG), and 197 to 199 (GFA) each bind substrate. Cys-215 (acyl-thioester intermediate) is an active-site residue.

The protein belongs to the LipB family.

Its subcellular location is the cytoplasm. It catalyses the reaction octanoyl-[ACP] + L-lysyl-[protein] = N(6)-octanoyl-L-lysyl-[protein] + holo-[ACP] + H(+). The protein operates within protein modification; protein lipoylation via endogenous pathway; protein N(6)-(lipoyl)lysine from octanoyl-[acyl-carrier-protein]: step 1/2. Catalyzes the transfer of endogenously produced octanoic acid from octanoyl-acyl-carrier-protein onto the lipoyl domains of lipoate-dependent enzymes. Lipoyl-ACP can also act as a substrate although octanoyl-ACP is likely to be the physiological substrate. In Streptomyces griseus subsp. griseus (strain JCM 4626 / CBS 651.72 / NBRC 13350 / KCC S-0626 / ISP 5235), this protein is Octanoyltransferase.